The sequence spans 1238 residues: ATP-dependent helicase/nuclease subunit A (1238 aa).

The region spanning V12–R490 is the UvrD-like helicase ATP-binding domain. A33–T40 contacts ATP. A UvrD-like helicase C-terminal domain is found at G510–G818.

Belongs to the helicase family. AddA subfamily. Heterodimer of AddA and AddB/RexB. Mg(2+) serves as cofactor.

The catalysed reaction is Couples ATP hydrolysis with the unwinding of duplex DNA by translocating in the 3'-5' direction.. It carries out the reaction ATP + H2O = ADP + phosphate + H(+). Its function is as follows. The heterodimer acts as both an ATP-dependent DNA helicase and an ATP-dependent, dual-direction single-stranded exonuclease. Recognizes the chi site generating a DNA molecule suitable for the initiation of homologous recombination. The AddA nuclease domain is required for chi fragment generation; this subunit has the helicase and 3' -&gt; 5' nuclease activities. In Lysinibacillus sphaericus (strain C3-41), this protein is ATP-dependent helicase/nuclease subunit A.